A 160-amino-acid polypeptide reads, in one-letter code: Cytochrome b6-f complex subunit 4 (160 aa).

Transmembrane regions (helical) follow at residues 36–56 (LLYVFPLTMLGTLTCIVGLSV), 95–115 (LLGVLAMAAVPLGLITVPFIE), and 131–151 (LTFIFGFFTAVWLGIGACVPI).

It belongs to the cytochrome b family. PetD subfamily. As to quaternary structure, the 4 large subunits of the cytochrome b6-f complex are cytochrome b6, subunit IV (17 kDa polypeptide, petD), cytochrome f and the Rieske protein, while the 4 small subunits are petG, petL, petM and petN. The complex functions as a dimer.

It is found in the plastid. It localises to the chloroplast thylakoid membrane. In terms of biological role, component of the cytochrome b6-f complex, which mediates electron transfer between photosystem II (PSII) and photosystem I (PSI), cyclic electron flow around PSI, and state transitions. The protein is Cytochrome b6-f complex subunit 4 of Phaeodactylum tricornutum (strain CCAP 1055/1).